The primary structure comprises 354 residues: Dual-specificity RNA methyltransferase RlmN (354 aa).

Glu86 functions as the Proton acceptor in the catalytic mechanism. A Radical SAM core domain is found at 105 to 338; that stretch reads RHARYTICVS…CTIRQSKGLD (234 aa). Cys112 and Cys343 are disulfide-bonded. Cys119, Cys123, and Cys126 together coordinate [4Fe-4S] cluster. S-adenosyl-L-methionine-binding positions include 169-170, Ser201, 224-226, and Asn300; these read GE and SLH. Cys343 acts as the S-methylcysteine intermediate in catalysis.

This sequence belongs to the radical SAM superfamily. RlmN family. It depends on [4Fe-4S] cluster as a cofactor.

It localises to the cytoplasm. The catalysed reaction is adenosine(2503) in 23S rRNA + 2 reduced [2Fe-2S]-[ferredoxin] + 2 S-adenosyl-L-methionine = 2-methyladenosine(2503) in 23S rRNA + 5'-deoxyadenosine + L-methionine + 2 oxidized [2Fe-2S]-[ferredoxin] + S-adenosyl-L-homocysteine. The enzyme catalyses adenosine(37) in tRNA + 2 reduced [2Fe-2S]-[ferredoxin] + 2 S-adenosyl-L-methionine = 2-methyladenosine(37) in tRNA + 5'-deoxyadenosine + L-methionine + 2 oxidized [2Fe-2S]-[ferredoxin] + S-adenosyl-L-homocysteine. In terms of biological role, specifically methylates position 2 of adenine 2503 in 23S rRNA and position 2 of adenine 37 in tRNAs. m2A2503 modification seems to play a crucial role in the proofreading step occurring at the peptidyl transferase center and thus would serve to optimize ribosomal fidelity. The chain is Dual-specificity RNA methyltransferase RlmN from Campylobacter fetus subsp. fetus (strain 82-40).